Here is a 1723-residue protein sequence, read N- to C-terminus: Lys-gingipain (1723 aa).

A signal peptide spans 1–24; it reads MRKLLLLIAASLLGVGLYAQSAKI. A propeptide spanning residues 25–228 is cleaved from the precursor; it reads KLDAPTTRTT…ETAYKQLFNR (204 aa). The Ca(2+) site is built by Asp313, Asp337, Asp339, Phe341, and Glu343. His444 acts as the Proton donor in catalysis. Residue Cys477 is the Nucleophile of the active site. Ca(2+) contacts are provided by Phe482 and Glu491. The tract at residues 964–985 is disordered; it reads WDAPNGTPNPNPNPNPGTTTLS. 20 residues coordinate Ca(2+): Ser987, Glu989, Asp1000, Asp1002, Asp1004, His1006, Ser1021, Gly1023, Asn1042, Asp1145, Glu1146, Asp1430, Glu1432, Asp1444, Asp1446, Asp1448, Asn1450, Ser1480, Asn1495, and Asp1585.

The protein belongs to the peptidase C25 family. Post-translationally, proteolytically cleaved into a catalytic subunit and three adhesins. Arg-gingipain is involved in this post-translational processing.

It localises to the secreted. It catalyses the reaction Endopeptidase with strict specificity for lysyl bonds.. With respect to regulation, activated by the thiol-reducing agents cysteine, 2-mercaptoethanol and dithiothreitol. Inhibited by iodacetamide, iodoacetic acid, leupeptin, tosyl-L-lysine and tosyl-L-phenylalanine. Not inhibited by elastatinal, chymostatin, cystatins, alpha1-antichymotrypsin or the serine protease inhibitors phenylmethylsulfonyl fluoride and diisopropylfluorophosphate. Not inhibited by metal ion chelators. Inhibited by the heavy metal ions Fe(3+), Zn(2+), Cu(2+) and Mn(2+). Cysteine proteinase with a strong preference for substrates with Lys in the P1 position. Hydrolyzes bovine hemoglobin, bovine serum albumin, casein, human placental type I collagen and human IgA and IgG. Disrupts the functions of polymorphonuclear leukocytes. May act as a virulence factor in the development of peridontal disease. Involved in the coaggregation of P.gingivalis with other oral bacteria. The chain is Lys-gingipain from Porphyromonas gingivalis (strain ATCC 33277 / DSM 20709 / CIP 103683 / JCM 12257 / NCTC 11834 / 2561).